The primary structure comprises 716 residues: Fatty acid oxidation complex subunit alpha (716 aa).

The enoyl-CoA hydratase/isomerase stretch occupies residues 1-189 (MIYQSPTIQV…KVGAIDAVVA (189 aa)). Asp-296 is a substrate binding site. The interval 311-716 (QAVNSAAVLG…AATNGSYYPA (406 aa)) is 3-hydroxyacyl-CoA dehydrogenase. Residues Met-324, Asp-343, 400 to 402 (VVE), Lys-407, and Ser-429 contribute to the NAD(+) site. Catalysis depends on His-450, which acts as the For 3-hydroxyacyl-CoA dehydrogenase activity. Asn-453 is an NAD(+) binding site. Substrate is bound by residues Asn-500 and Tyr-660.

The protein in the N-terminal section; belongs to the enoyl-CoA hydratase/isomerase family. In the C-terminal section; belongs to the 3-hydroxyacyl-CoA dehydrogenase family. In terms of assembly, heterotetramer of two alpha chains (FadB) and two beta chains (FadA).

It catalyses the reaction a (3S)-3-hydroxyacyl-CoA + NAD(+) = a 3-oxoacyl-CoA + NADH + H(+). The catalysed reaction is a (3S)-3-hydroxyacyl-CoA = a (2E)-enoyl-CoA + H2O. It carries out the reaction a 4-saturated-(3S)-3-hydroxyacyl-CoA = a (3E)-enoyl-CoA + H2O. The enzyme catalyses (3S)-3-hydroxybutanoyl-CoA = (3R)-3-hydroxybutanoyl-CoA. It catalyses the reaction a (3Z)-enoyl-CoA = a 4-saturated (2E)-enoyl-CoA. The catalysed reaction is a (3E)-enoyl-CoA = a 4-saturated (2E)-enoyl-CoA. The protein operates within lipid metabolism; fatty acid beta-oxidation. Functionally, involved in the aerobic and anaerobic degradation of long-chain fatty acids via beta-oxidation cycle. Catalyzes the formation of 3-oxoacyl-CoA from enoyl-CoA via L-3-hydroxyacyl-CoA. It can also use D-3-hydroxyacyl-CoA and cis-3-enoyl-CoA as substrate. This is Fatty acid oxidation complex subunit alpha from Shewanella loihica (strain ATCC BAA-1088 / PV-4).